The following is a 699-amino-acid chain: LMBR1 domain-containing protein 2 homolog (699 aa).

Topologically, residues 1 to 3 (MAY) are extracellular. The chain crosses the membrane as a helical span at residues 4–26 (LLTFGIIAALCLASISLYRYGNI). The Cytoplasmic segment spans residues 27–30 (PRQH). Residues 31–51 (ILVTLSVLTAWCFSFLIVFTI) form a helical membrane-spanning segment. Over 52–106 (PLDVTSTLYRQCLAEHKLALDAAGNASTTANITPPPECQEPWGMVPESVFPNLWR) the chain is Extracellular. Residue Asn76 is glycosylated (N-linked (GlcNAc...) asparagine). The helical transmembrane segment at 107–127 (IIYWSSQFLTWLIMPLMQSYL) threads the bilayer. Residues 128–144 (KAGDFTIKGKLKSALIE) are Cytoplasmic-facing. A helical membrane pass occupies residues 145-165 (NAIYYGSYLFICGVLLIYIAV). Residues 166–181 (KGVPLDWQKLKAIASS) are Extracellular-facing. A helical transmembrane segment spans residues 182–202 (ASNTWGLFLLILLLGYALVEV). The Cytoplasmic portion of the chain corresponds to 203–381 (PRSLWNNAKP…ECLLKAPFLK (179 aa)). Residues 382-402 (TLCVVTATMSAMVVWSEVTFF) form a helical membrane-spanning segment. The Extracellular segment spans residues 403–426 (SRDPVLSIFANVIYLAKESYDFFT). Residues 427-447 (IEVFSMMVLCYFFYCTYSTIL) form a helical membrane-spanning segment. Residues 448-467 (RIRFLNLYYLAPHHQTNEHS) are Cytoplasmic-facing. A helical transmembrane segment spans residues 468 to 488 (LIFSGMLLCRLTPPMCLNFLG). The Extracellular portion of the chain corresponds to 489–514 (LIHMDSHIIPERMMETYYTRIMGHMD). A helical membrane pass occupies residues 515–535 (VIGIISNGFNIYFPMCMLAFC). Residues 536 to 699 (LSTWFSLGSR…PPPRGLFDDV (164 aa)) lie on the Cytoplasmic side of the membrane. The stretch at 564–592 (ELVQEGKDLIAREKRRRQRAEEAMARRRD) forms a coiled coil. The tract at residues 669 to 699 (FRGTSELDPDYEAENERRIVGPPPRGLFDDV) is disordered.

This sequence belongs to the LIMR family.

The protein resides in the membrane. The protein is LMBR1 domain-containing protein 2 homolog of Drosophila pseudoobscura pseudoobscura (Fruit fly).